The primary structure comprises 497 residues: ADP-dependent glucokinase (497 aa).

Residues 1–22 form the signal peptide; that stretch reads MALWRGSAYAGFLALAVGCVFL. Residues 52–497 form the ADPK domain; sequence SPEGRLAAAW…LFYSEVHPHY (446 aa). Residues glutamate 297, glutamate 328, and aspartate 481 each contribute to the Mg(2+) site. Aspartate 481 functions as the Proton acceptor in the catalytic mechanism.

This sequence belongs to the ADP-dependent glucokinase family. As to quaternary structure, monomer. Mg(2+) is required as a cofactor.

The protein localises to the secreted. The catalysed reaction is D-glucose + ADP = D-glucose 6-phosphate + AMP + H(+). It participates in carbohydrate degradation; glycolysis. Its function is as follows. Catalyzes the phosphorylation of D-glucose to D-glucose 6-phosphate using ADP as the phosphate donor. GDP and CDP can replace ADP, but with reduced efficiency. This chain is ADP-dependent glucokinase (ADPGK), found in Homo sapiens (Human).